The primary structure comprises 81 residues: Putative defensin-like protein 265 (81 aa).

A signal peptide spans M1 to A26. Cystine bridges form between C48-C66, C54-C71, and C58-C73.

The protein belongs to the DEFL family.

The protein localises to the secreted. This is Putative defensin-like protein 265 from Arabidopsis thaliana (Mouse-ear cress).